Here is a 150-residue protein sequence, read N- to C-terminus: MKVIFLEDVRGKGKKGQVKDVPDGYAQNFLIKNGKAKPATTAAVSALKGQQHAEAKNAAAELAEAKVLKTKIEDDKTIVEVKSKAGEDSRLFGSIPSKQIAQALEQQYKIKVDKRKIDLPEPIKALGYRNVDVRIHPDVTATIRVHIVAE.

It belongs to the bacterial ribosomal protein bL9 family.

Binds to the 23S rRNA. This chain is Large ribosomal subunit protein bL9, found in Latilactobacillus sakei subsp. sakei (strain 23K) (Lactobacillus sakei subsp. sakei).